The chain runs to 902 residues: Protein translocase subunit SecA (902 aa).

ATP contacts are provided by residues glutamine 87, 105-109 (GEGKT), and aspartate 512. The disordered stretch occupies residues 850–902 (RLAKQQQLSHEVTKESQMSAVDGQVASGKKVGRNEPCPCGSGKKYKHCHGKLG). Polar residues predominate over residues 853 to 868 (KQQQLSHEVTKESQMS). Residues cysteine 886, cysteine 888, cysteine 897, and histidine 898 each coordinate Zn(2+). A compositionally biased stretch (basic residues) spans 892 to 902 (KKYKHCHGKLG).

This sequence belongs to the SecA family. In terms of assembly, monomer and homodimer. Part of the essential Sec protein translocation apparatus which comprises SecA, SecYEG and auxiliary proteins SecDF-YajC and YidC. The cofactor is Zn(2+).

The protein localises to the cell inner membrane. It is found in the cytoplasm. The catalysed reaction is ATP + H2O + cellular proteinSide 1 = ADP + phosphate + cellular proteinSide 2.. Part of the Sec protein translocase complex. Interacts with the SecYEG preprotein conducting channel. Has a central role in coupling the hydrolysis of ATP to the transfer of proteins into and across the cell membrane, serving both as a receptor for the preprotein-SecB complex and as an ATP-driven molecular motor driving the stepwise translocation of polypeptide chains across the membrane. The chain is Protein translocase subunit SecA from Proteus mirabilis (strain HI4320).